A 303-amino-acid polypeptide reads, in one-letter code: N-acetyl-D-glucosamine kinase (303 aa).

ATP is bound by residues 4–11 and 133–140; these read GFDIGGTK and GVGGGLIF. Zn(2+) is bound by residues His157, Cys177, Cys179, and Cys184.

This sequence belongs to the ROK (NagC/XylR) family. NagK subfamily.

It carries out the reaction N-acetyl-D-glucosamine + ATP = N-acetyl-D-glucosamine 6-phosphate + ADP + H(+). It participates in cell wall biogenesis; peptidoglycan recycling. Functionally, catalyzes the phosphorylation of N-acetyl-D-glucosamine (GlcNAc) derived from cell-wall degradation, yielding GlcNAc-6-P. The protein is N-acetyl-D-glucosamine kinase of Escherichia coli O7:K1 (strain IAI39 / ExPEC).